A 515-amino-acid polypeptide reads, in one-letter code: ATP-dependent rRNA helicase rrp-3 (515 aa).

The segment at 1–85 (MSTKRRKTSD…LDVAPEQEEV (85 aa)) is disordered. Over residues 15 to 24 (LKKAAAPSAP) the composition is skewed to low complexity. A compositionally biased stretch (basic and acidic residues) spans 25–55 (ELKKEKKVKDKSTKDKSSTKKTEKTEKKQDA). Residues 69-85 (TEEDSVTLDVAPEQEEV) are compositionally biased toward acidic residues. Residues 90 to 118 (KTFKDLGIVDALCEACERLGYKNPTPIQE) carry the Q motif motif. One can recognise a Helicase ATP-binding domain in the interval 121-292 (IPLALQNRDI…RASLRDPLKV (172 aa)). Residue 134-141 (AETGSGKT) coordinates ATP. A DEAD box motif is present at residues 240–243 (DEAD). Positions 316-464 (HKDTYLVYLC…EYPLEKDEVM (149 aa)) constitute a Helicase C-terminal domain. Positions 482-515 (KSLMENQGKHGGLLKRKRGNGQGGGRDHMDAEEG) are disordered. Positions 506–515 (GRDHMDAEEG) are enriched in basic and acidic residues.

This sequence belongs to the DEAD box helicase family. DDX47/RRP3 subfamily.

The protein localises to the nucleus. Functionally, required for pre-ribosomal RNA processing. Involved in the maturation of the 35S-pre-rRNA and to its cleavage to mature 18S rRNA. In Neurospora crassa (strain ATCC 24698 / 74-OR23-1A / CBS 708.71 / DSM 1257 / FGSC 987), this protein is ATP-dependent rRNA helicase rrp-3 (rrp-3).